Here is a 431-residue protein sequence, read N- to C-terminus: MVKGTLYTYPENFRAYKALIAAQYSGAQVKVADNFKFGETNKSAEFLKKFPGGKVPAFETAEGQYLSESNAIAYLLANEQLRGGKCPFVQAQVQQWISFADNEIVPASCAWVFPLLGILPQQKNSTAKQEAEAVLQQLNQKLQDATFLAGERITLADIVVFSSLLHLYEYVLEPSVRSAFGNVNRWFVTILNQKQVQAVVKDYKLCEKALVFDPKKYAEFQAKTGAAKPQQQAQQQKQEKKPKEKKEAPKKAAEPAEELDAADEALAAEPKSKDPFDALPKGTFNFDDFKRVYSNEDEAKSIPYFFDKFDAENYSIWFGEYKYNEELSKVFMSCNLITGMFQRLDKMRKAAFASVCLFGEDGNSTISGIWVWRGQDLAFTLSPDWQIDYEVYDWKKLDAKSEETKKLVTQYFSWSGTDKDGRKFNQGKIFK.

A GST N-terminal domain is found at 2–84 (VKGTLYTYPE…LLANEQLRGG (83 aa)). The GST C-terminal domain maps to 86 to 212 (CPFVQAQVQQ…YKLCEKALVF (127 aa)). Residues 223–261 (KTGAAKPQQQAQQQKQEKKPKEKKEAPKKAAEPAEELDA) are disordered. Positions 226-236 (AAKPQQQAQQQ) are enriched in low complexity. The segment covering 237-254 (KQEKKPKEKKEAPKKAAE) has biased composition (basic and acidic residues). The region spanning 272-431 (SKDPFDALPK…RKFNQGKIFK (160 aa)) is the EF-1-gamma C-terminal domain. Ser294 is subject to Phosphoserine.

Interacts with microtubules. May interact with BicDR; the interaction is probably indirect. Interacts (via C-terminus) with Doa; the interaction is probably direct, is transient and leads to phosphorylation of eEF1gamma by Doa. EF-1 is composed of four subunits: alpha, beta, delta, and gamma. Phosphorylated on Ser-294 by LAMMER kinases, including Doa. Phosphorylation on Ser-294 by Doa is required for negative regulation of microtubule-based transport.

The protein resides in the cytoplasm. It is found in the nucleus. It localises to the cytoskeleton. In terms of biological role, microtubule binding protein involved in regulation of microtubule-based transport. Probably plays a role in anchoring the EF-1 complex to other cellular components. Probably involved in formation and/or development of mechanosensory organs during metamorphosis. Required for cellular and organismal viability. Not essential for the innate immune response to bacterial infection. The chain is Elongation factor 1-gamma from Drosophila melanogaster (Fruit fly).